A 152-amino-acid chain; its full sequence is MFP1 attachment factor 1 (152 aa).

Disordered regions lie at residues 1–33 (MAEI…PPTQ) and 107–152 (DTVK…ETEP). The segment at 12–115 (TVTQETQNKP…IDTVKSRSAP (104 aa)) is WPP. Polar residues predominate over residues 134–152 (EPSSASGLTGEVSSVETEP).

In terms of assembly, interacts with WAP through its WPP domain. Binds to MFP1 and FPP proteins. As to expression, expressed in young tomato leaves, young fruits, and flowers (at protein level).

It localises to the nucleus envelope. The protein resides in the cytoplasm. Its subcellular location is the golgi apparatus. The protein localises to the nucleus. It is found in the nucleus matrix. The chain is MFP1 attachment factor 1 (MAF1) from Solanum lycopersicum (Tomato).